Consider the following 311-residue polypeptide: Methionyl-tRNA formyltransferase (311 aa).

112–115 (SLLP) is a (6S)-5,6,7,8-tetrahydrofolate binding site.

Belongs to the Fmt family.

It carries out the reaction L-methionyl-tRNA(fMet) + (6R)-10-formyltetrahydrofolate = N-formyl-L-methionyl-tRNA(fMet) + (6S)-5,6,7,8-tetrahydrofolate + H(+). Attaches a formyl group to the free amino group of methionyl-tRNA(fMet). The formyl group appears to play a dual role in the initiator identity of N-formylmethionyl-tRNA by promoting its recognition by IF2 and preventing the misappropriation of this tRNA by the elongation apparatus. This Rhizobium leguminosarum bv. trifolii (strain WSM2304) protein is Methionyl-tRNA formyltransferase.